The primary structure comprises 354 residues: Decorin (354 aa).

The signal sequence occupies residues 1-16; that stretch reads MKATLVLFLLAQVSWA. Residues 17 to 30 constitute a propeptide that is removed on maturation; that stretch reads GPFEQRGLFDFMLE. O-linked (Xyl...) (glycosaminoglycan) serine glycosylation is present at S34. 2 cysteine pairs are disulfide-bonded: C49-C55 and C53-C62. LRR repeat units follow at residues 68 to 88, 89 to 112, 113 to 136, 137 to 157, 158 to 181, 182 to 207, 208 to 228, 229 to 252, 253 to 276, 277 to 299, 300 to 329, and 330 to 354; these read DKVP…NNKI, TEIK…NNKI, SKIS…KNHL, KELP…DNEI, TKLK…GNPL, KNSG…DTNI, TAIP…GNKI, AKVD…FNSI, TVVE…NNKL, LRVP…NNNI, SEVG…SNPV, and RYWQ…GNYK. N-linked (GlcNAc...) asparagine glycosylation is present at N206. 3 N-linked (GlcNAc...) asparagine glycosylation sites follow: N241, N257, and N298. An intrachain disulfide couples C308 to C341.

It belongs to the small leucine-rich proteoglycan (SLRP) family. SLRP class I subfamily. In terms of assembly, binds to type I and type II collagen, fibronectin and TGF-beta. Forms a ternary complex with MFAP2 and ELN. Interacts with DPT. Post-translationally, the attached glycosaminoglycan chain can be either chondroitin sulfate or dermatan sulfate depending upon the tissue of origin.

The protein resides in the secreted. Its subcellular location is the extracellular space. The protein localises to the extracellular matrix. Its function is as follows. May affect the rate of fibrils formation. May be implicated in the dilatation of the rat cervix. This is Decorin (Dcn) from Rattus norvegicus (Rat).